Consider the following 131-residue polypeptide: Ribosome-binding factor A (131 aa).

This sequence belongs to the RbfA family. In terms of assembly, monomer. Binds 30S ribosomal subunits, but not 50S ribosomal subunits or 70S ribosomes.

The protein localises to the cytoplasm. Functionally, one of several proteins that assist in the late maturation steps of the functional core of the 30S ribosomal subunit. Associates with free 30S ribosomal subunits (but not with 30S subunits that are part of 70S ribosomes or polysomes). Required for efficient processing of 16S rRNA. May interact with the 5'-terminal helix region of 16S rRNA. This Chromohalobacter salexigens (strain ATCC BAA-138 / DSM 3043 / CIP 106854 / NCIMB 13768 / 1H11) protein is Ribosome-binding factor A.